The primary structure comprises 212 residues: Dephospho-CoA kinase (212 aa).

The region spanning I4–T204 is the DPCK domain. C12–V17 lines the ATP pocket.

This sequence belongs to the CoaE family.

It localises to the cytoplasm. It carries out the reaction 3'-dephospho-CoA + ATP = ADP + CoA + H(+). It functions in the pathway cofactor biosynthesis; coenzyme A biosynthesis; CoA from (R)-pantothenate: step 5/5. Catalyzes the phosphorylation of the 3'-hydroxyl group of dephosphocoenzyme A to form coenzyme A. This Blochmanniella pennsylvanica (strain BPEN) protein is Dephospho-CoA kinase.